We begin with the raw amino-acid sequence, 485 residues long: Ribosomal protein S6 kinase beta-2 (485 aa).

The disordered stretch occupies residues 1-26 (MAAVFDLDLETEEGSEGEGEPEFSPA). The segment covering 7–21 (LDLETEEGSEGEGEP) has biased composition (acidic residues). S15 carries the phosphoserine modification. One can recognise a Protein kinase domain in the interval 67–328 (FELLSVLGKG…AADVQRHPFF (262 aa)). ATP is bound by residues 73 to 81 (LGKGGYGKV) and K99. The Proton acceptor role is filled by D194. One can recognise an AGC-kinase C-terminal domain in the interval 329-399 (RHINWDDLLA…VAPSVLDSIK (71 aa)). The tract at residues 407–485 (KLRSPRRLNS…SKKGRGRSGR (79 aa)) is disordered. S417 carries the post-translational modification Phosphoserine. T420 bears the Phosphothreonine mark. At S423 the chain carries Phosphoserine. Positions 436-469 (SPGPPEPMEPSLPPLLPSPPSPPPTSTAPLPIRP) are enriched in pro residues. The Nuclear localization signal motif lies at 474-480 (KKSKKGR). Over residues 474–485 (KKSKKGRGRSGR) the composition is skewed to basic residues. S476 carries the post-translational modification Phosphoserine; by PKC.

This sequence belongs to the protein kinase superfamily. AGC Ser/Thr protein kinase family. S6 kinase subfamily. In terms of processing, phosphorylated and activated by MTOR. Phosphorylation by PKC within the NLS in response to mitogenic stimuli causes cytoplasmic retention.

It localises to the cytoplasm. It is found in the nucleus. The enzyme catalyses L-seryl-[protein] + ATP = O-phospho-L-seryl-[protein] + ADP + H(+). It catalyses the reaction L-threonyl-[protein] + ATP = O-phospho-L-threonyl-[protein] + ADP + H(+). Its function is as follows. Phosphorylates specifically ribosomal protein S6. Seems to act downstream of mTOR signaling in response to growth factors and nutrients to promote cell proliferation, cell growth and cell cycle progression in an alternative pathway regulated by MEAK7. This is Ribosomal protein S6 kinase beta-2 (Rps6kb2) from Mus musculus (Mouse).